A 180-amino-acid chain; its full sequence is Nucleoside-triphosphatase THEP1 (180 aa).

Residues 18–25 (GRPGVGKT) and 104–111 (LVIMDEIG) each bind ATP.

It belongs to the THEP1 NTPase family.

The catalysed reaction is a ribonucleoside 5'-triphosphate + H2O = a ribonucleoside 5'-diphosphate + phosphate + H(+). Has nucleotide phosphatase activity towards ATP, GTP, CTP, TTP and UTP. May hydrolyze nucleoside diphosphates with lower efficiency. The polypeptide is Nucleoside-triphosphatase THEP1 (Metallosphaera sedula (strain ATCC 51363 / DSM 5348 / JCM 9185 / NBRC 15509 / TH2)).